The sequence spans 497 residues: Serine/threonine protein phosphatase 2A 57 kDa regulatory subunit B' epsilon isoform (497 aa).

Residues Lys12–Thr71 form a disordered region. The segment covering Asn23–Thr34 has biased composition (low complexity). Residues Val35–Thr71 show a composition bias toward polar residues.

It belongs to the phosphatase 2A regulatory subunit B56 family. In terms of assembly, PP2A consists of a common heteromeric enzyme, composed of a catalytic subunit (subunits C), a constant regulatory subunit (subunit A), and a variety of regulatory subunits such as subunits B (the R2/B/PR55/B55, R3/B''/PR72/PR130/PR59 and R5/B'/B56 families). Expressed ubiquitously.

The protein resides in the cytoplasm. Functionally, the B regulatory subunit may modulate substrate selectivity and catalytic activity, and may also direct the localization of the catalytic enzyme to a particular subcellular compartment. The protein is Serine/threonine protein phosphatase 2A 57 kDa regulatory subunit B' epsilon isoform (B'EPSILON) of Arabidopsis thaliana (Mouse-ear cress).